The sequence spans 338 residues: Anthranilate phosphoribosyltransferase (338 aa).

Residues glycine 81, 84–85 (GD), threonine 89, 91–94 (NIST), 109–117 (KHGNRALSS), and alanine 121 contribute to the 5-phospho-alpha-D-ribose 1-diphosphate site. Glycine 81 is a binding site for anthranilate. Serine 93 contacts Mg(2+). Asparagine 112 serves as a coordination point for anthranilate. Position 167 (arginine 167) interacts with anthranilate. Mg(2+) is bound by residues aspartate 225 and glutamate 226.

It belongs to the anthranilate phosphoribosyltransferase family. Homodimer. Mg(2+) serves as cofactor.

It carries out the reaction N-(5-phospho-beta-D-ribosyl)anthranilate + diphosphate = 5-phospho-alpha-D-ribose 1-diphosphate + anthranilate. It participates in amino-acid biosynthesis; L-tryptophan biosynthesis; L-tryptophan from chorismate: step 2/5. Its function is as follows. Catalyzes the transfer of the phosphoribosyl group of 5-phosphorylribose-1-pyrophosphate (PRPP) to anthranilate to yield N-(5'-phosphoribosyl)-anthranilate (PRA). This chain is Anthranilate phosphoribosyltransferase, found in Rhizobium etli (strain ATCC 51251 / DSM 11541 / JCM 21823 / NBRC 15573 / CFN 42).